A 147-amino-acid polypeptide reads, in one-letter code: Heavy metal-dependent transcription regulator 2 (147 aa).

One can recognise an HTH merR-type domain in the interval 1-69; that stretch reads MNIGEASKTS…VEQIKELLAL (69 aa). The segment at residues 3–22 is a DNA-binding region (H-T-H motif); sequence IGEASKTSGVSSKMIRYYEQ.

Its subcellular location is the cytoplasm. In terms of biological role, transcriptional regulator involved in acid tolerance. Binds copper. The sequence is that of Heavy metal-dependent transcription regulator 2 (hmrR2) from Rhizobium meliloti (strain 1021) (Ensifer meliloti).